Here is a 154-residue protein sequence, read N- to C-terminus: MSRRRTPKKRVIAPDALYNSVLVHTIVNHLMKKGKKSLAYMMFYETLSEIKQKTEQDPLEVIQKAVNNVRPLVIVKSRRVSGSTRQVPLSVDYEIGVALAIRWILAACRKRVGKSMISKMTNEFLDASKNIGNAIRKKDEIAKMAQANRAYARF.

Belongs to the universal ribosomal protein uS7 family. In terms of assembly, part of the 30S ribosomal subunit.

The protein resides in the plastid. Its subcellular location is the chloroplast. One of the primary rRNA binding proteins, it binds directly to 16S rRNA where it nucleates assembly of the head domain of the 30S subunit. The chain is Small ribosomal subunit protein uS7c (rps7) from Pleurastrum terricola (Filamentous green alga).